The primary structure comprises 218 residues: N-(5'-phosphoribosyl)anthranilate isomerase (218 aa).

This sequence belongs to the TrpF family.

The catalysed reaction is N-(5-phospho-beta-D-ribosyl)anthranilate = 1-(2-carboxyphenylamino)-1-deoxy-D-ribulose 5-phosphate. It functions in the pathway amino-acid biosynthesis; L-tryptophan biosynthesis; L-tryptophan from chorismate: step 3/5. This is N-(5'-phosphoribosyl)anthranilate isomerase from Acetivibrio thermocellus (strain ATCC 27405 / DSM 1237 / JCM 9322 / NBRC 103400 / NCIMB 10682 / NRRL B-4536 / VPI 7372) (Clostridium thermocellum).